The primary structure comprises 35 residues: Conotoxin Cal6.1f (35 aa).

A propeptide spanning residues 1 to 8 (GLIRPSKR) is cleaved from the precursor. 3 disulfides stabilise this stretch: C9–C25, C16–C29, and C24–C34.

The protein belongs to the conotoxin O1 superfamily. As to expression, expressed by the venom duct.

Its subcellular location is the secreted. Probable neurotoxin with unknown target. Possibly targets ion channels. This Californiconus californicus (California cone) protein is Conotoxin Cal6.1f.